Reading from the N-terminus, the 189-residue chain is MQLLKKRILQDGKCYEGGILKVDSFINHQMDPVLMKSIGVEFVRLFAGTNVNKIMTIEASGIAPAIMTGYLMDLPVVFAKKKSPRTIQNALSTTVHSFTKDRDYEVVISSDFLTPKDNVLFVDDFLAYGNAALGVIDLIKQSGANLVGMGFIIEKAFQNGRKTLEERGVRVESLAIIEDLSNCRITIKD.

2 residues coordinate xanthine: L20 and N27. Residue 127 to 131 participates in 5-phospho-alpha-D-ribose 1-diphosphate binding; sequence AYGNA. K155 contacts xanthine.

Belongs to the purine/pyrimidine phosphoribosyltransferase family. Xpt subfamily. In terms of assembly, homodimer.

It localises to the cytoplasm. It catalyses the reaction XMP + diphosphate = xanthine + 5-phospho-alpha-D-ribose 1-diphosphate. The protein operates within purine metabolism; XMP biosynthesis via salvage pathway; XMP from xanthine: step 1/1. Converts the preformed base xanthine, a product of nucleic acid breakdown, to xanthosine 5'-monophosphate (XMP), so it can be reused for RNA or DNA synthesis. This is Xanthine phosphoribosyltransferase from Bacteroides fragilis (strain ATCC 25285 / DSM 2151 / CCUG 4856 / JCM 11019 / LMG 10263 / NCTC 9343 / Onslow / VPI 2553 / EN-2).